A 348-amino-acid polypeptide reads, in one-letter code: Heat-inducible transcription repressor HrcA (348 aa).

The protein belongs to the HrcA family.

Its function is as follows. Negative regulator of class I heat shock genes (grpE-dnaK-dnaJ and groELS operons). Prevents heat-shock induction of these operons. The protein is Heat-inducible transcription repressor HrcA of Chlorobium chlorochromatii (strain CaD3).